A 454-amino-acid polypeptide reads, in one-letter code: ESX-1 secretion-associated protein EspB (454 aa).

3 disordered regions span residues 17–40 (RADEVEAPMATPPTDVPQAPSGLT), 82–128 (GEVE…AGES), and 391–454 (AGQG…QDNK). The segment covering 391-422 (AGQGGGAAGRGMAGGGMGMPMGGAGQGQGGAK) has biased composition (gly residues).

This sequence belongs to the EspB family. In terms of processing, cleaved at close to the C-terminus during secretion.

It is found in the secreted. The polypeptide is ESX-1 secretion-associated protein EspB (Mycobacterium marinum (strain ATCC BAA-535 / M)).